Reading from the N-terminus, the 180-residue chain is Ribulose bisphosphate carboxylase small subunit, chloroplastic (180 aa).

Residues 1 to 56 constitute a chloroplast transit peptide; that stretch reads MASSVLSSAAVATRSNVAQANMVAPFTGLKSAASFPVSRKQNLDITSIASNGGRVQ.

It belongs to the RuBisCO small chain family. As to quaternary structure, heterohexadecamer of 8 large and 8 small subunits. In terms of assembly, (Microbial infection) Binds to tobamovirus movement protein at the plasmodesmata (e.g. tomato mosaic virus MP AC P69513); this interaction seems required for viral systemic movement.

The protein resides in the plastid. Its subcellular location is the chloroplast. It is found in the cell junction. The protein localises to the plasmodesma. RuBisCO catalyzes two reactions: the carboxylation of D-ribulose 1,5-bisphosphate, the primary event in carbon dioxide fixation, as well as the oxidative fragmentation of the pentose substrate. Both reactions occur simultaneously and in competition at the same active site. Although the small subunit is not catalytic it is essential for maximal activity. Involved in antiviral defenses. Its function is as follows. (Microbial infection) Required for tobamovirus movement (e.g. tobacco mosaic virus (TMV)). This Nicotiana benthamiana protein is Ribulose bisphosphate carboxylase small subunit, chloroplastic.